The following is a 95-amino-acid chain: Acylphosphatase (95 aa).

Residues 10 to 95 form the Acylphosphatase-like domain; it reads CIHATVSGKV…VEDYSDFRVR (86 aa). Catalysis depends on residues Arg25 and Asn43.

This sequence belongs to the acylphosphatase family.

It catalyses the reaction an acyl phosphate + H2O = a carboxylate + phosphate + H(+). The chain is Acylphosphatase (acyP) from Coxiella burnetii (strain Dugway 5J108-111).